Consider the following 54-residue polypeptide: UPF0391 membrane protein Pmen_0080 (54 aa).

Helical transmembrane passes span 4–24 (WALTFLIIAIIAAVLGFGGIA) and 28–48 (AGIAKILFVVFLVLFIISFIM).

It belongs to the UPF0391 family.

The protein resides in the cell membrane. The sequence is that of UPF0391 membrane protein Pmen_0080 from Ectopseudomonas mendocina (strain ymp) (Pseudomonas mendocina).